The sequence spans 374 residues: DNA replication and repair protein RecF (374 aa).

30 to 37 provides a ligand contact to ATP; that stretch reads GPNAQGKT.

The protein belongs to the RecF family.

The protein localises to the cytoplasm. The RecF protein is involved in DNA metabolism; it is required for DNA replication and normal SOS inducibility. RecF binds preferentially to single-stranded, linear DNA. It also seems to bind ATP. The protein is DNA replication and repair protein RecF of Lactobacillus johnsonii (strain CNCM I-12250 / La1 / NCC 533).